Here is a 481-residue protein sequence, read N- to C-terminus: Proline--tRNA ligase (481 aa).

This sequence belongs to the class-II aminoacyl-tRNA synthetase family. ProS type 3 subfamily. As to quaternary structure, homodimer.

The protein localises to the cytoplasm. The catalysed reaction is tRNA(Pro) + L-proline + ATP = L-prolyl-tRNA(Pro) + AMP + diphosphate. Functionally, catalyzes the attachment of proline to tRNA(Pro) in a two-step reaction: proline is first activated by ATP to form Pro-AMP and then transferred to the acceptor end of tRNA(Pro). This is Proline--tRNA ligase from Chlorobium luteolum (strain DSM 273 / BCRC 81028 / 2530) (Pelodictyon luteolum).